The chain runs to 383 residues: Putative glutamate--cysteine ligase 2-2 (383 aa).

The protein belongs to the glutamate--cysteine ligase type 2 family. YbdK subfamily.

The catalysed reaction is L-cysteine + L-glutamate + ATP = gamma-L-glutamyl-L-cysteine + ADP + phosphate + H(+). Its function is as follows. ATP-dependent carboxylate-amine ligase which exhibits weak glutamate--cysteine ligase activity. The polypeptide is Putative glutamate--cysteine ligase 2-2 (Legionella pneumophila (strain Paris)).